We begin with the raw amino-acid sequence, 163 residues long: CASP-like protein 1C2 (163 aa).

Topologically, residues 1–7 (MAKLHRL) are cytoplasmic. The chain crosses the membrane as a helical span at residues 8 to 28 (ISAVLRLAAAGAAAAAAVIMV). Residues 29–50 (TSHETTSLFGIEMEAKYSYTPS) are Extracellular-facing. The chain crosses the membrane as a helical span at residues 51 to 71 (FVFFVVAFAVTFAYSLLAAVL). The Cytoplasmic segment spans residues 72-80 (VRPGTTASR). A helical membrane pass occupies residues 81 to 101 (LVLLSDVTVGMLLTGAVAATG). At 102–129 (AISQVGKSGNEHAGWLPICAQVQAYCGH) the chain is on the extracellular side. The helical transmembrane segment at 130-150 (VMGALIAGFVSLLLYFLIIMY) threads the bilayer. At 151–163 (SLHAVAEPLCSCH) the chain is on the cytoplasmic side.

The protein belongs to the Casparian strip membrane proteins (CASP) family. Homodimer and heterodimers.

The protein localises to the cell membrane. This chain is CASP-like protein 1C2, found in Zea mays (Maize).